The sequence spans 144 residues: Transcription antitermination protein NusB (144 aa).

Belongs to the NusB family.

Its function is as follows. Involved in transcription antitermination. Required for transcription of ribosomal RNA (rRNA) genes. Binds specifically to the boxA antiterminator sequence of the ribosomal RNA (rrn) operons. The chain is Transcription antitermination protein NusB from Pelotomaculum thermopropionicum (strain DSM 13744 / JCM 10971 / SI).